The chain runs to 542 residues: uncharacterized protein (542 aa).

Residues 256 to 275 (KKSTTTSSPPITTTHLSKPE) form a disordered region. The segment covering 258 to 269 (STTTSSPPITTT) has biased composition (low complexity).

This is an uncharacterized protein from Caenorhabditis elegans.